The primary structure comprises 92 residues: UPF0235 protein PYRAB05010 (92 aa).

It belongs to the UPF0235 family.

The polypeptide is UPF0235 protein PYRAB05010 (Pyrococcus abyssi (strain GE5 / Orsay)).